The sequence spans 131 residues: Binder of sperm protein homolog 2 (131 aa).

Residues 1 to 22 (MEVMSHLVHWVFLAVYMYELNA) form the signal peptide. Fibronectin type-II domains are found at residues 35–79 (ISTD…YCTA) and 80–128 (QDPP…QCSP). 4 disulfide bridges follow: cysteine 40/cysteine 64, cysteine 54/cysteine 77, cysteine 85/cysteine 111, and cysteine 99/cysteine 126.

The protein belongs to the seminal plasma protein family. As to expression, epididymis.

The protein localises to the secreted. In terms of biological role, binds sperm in vitro but has no effect on sperm capacitation. Also binds gelatin and heparin, but not chondroitin sulfate B or phospholipid liposomes. This chain is Binder of sperm protein homolog 2, found in Mus musculus (Mouse).